The following is a 240-amino-acid chain: Ubiquinone biosynthesis O-methyltransferase (240 aa).

The S-adenosyl-L-methionine site is built by Arg-44, Gly-64, Asp-85, and Met-129.

It belongs to the methyltransferase superfamily. UbiG/COQ3 family.

It carries out the reaction a 3-demethylubiquinol + S-adenosyl-L-methionine = a ubiquinol + S-adenosyl-L-homocysteine + H(+). The catalysed reaction is a 3-(all-trans-polyprenyl)benzene-1,2-diol + S-adenosyl-L-methionine = a 2-methoxy-6-(all-trans-polyprenyl)phenol + S-adenosyl-L-homocysteine + H(+). The protein operates within cofactor biosynthesis; ubiquinone biosynthesis. O-methyltransferase that catalyzes the 2 O-methylation steps in the ubiquinone biosynthetic pathway. The polypeptide is Ubiquinone biosynthesis O-methyltransferase (Escherichia coli O7:K1 (strain IAI39 / ExPEC)).